A 1015-amino-acid chain; its full sequence is Translation initiation factor IF-2 (1015 aa).

4 disordered regions span residues 124-144 (EKEP…EKKV), 159-179 (EVTV…PKPV), 196-230 (KKEE…KEEE), and 250-386 (IDLA…VSEE). 2 stretches are compositionally biased toward basic and acidic residues: residues 196–217 (KKEE…EKPV) and 265–315 (SKEE…DPNG). The region spanning 514–684 (HRAPIVTVMG…LLEAEMLDLK (171 aa)) is the tr-type G domain. Residues 523-530 (GHVDHGKT) are G1. Residue 523–530 (GHVDHGKT) coordinates GTP. Residues 548–552 (GITQH) are G2. A G3 region spans residues 570-573 (DTPG). Residues 570 to 574 (DTPGH) and 624 to 627 (NKID) each bind GTP. The segment at 624–627 (NKID) is G4. The segment at 660–662 (SAK) is G5.

The protein belongs to the TRAFAC class translation factor GTPase superfamily. Classic translation factor GTPase family. IF-2 subfamily.

Its subcellular location is the cytoplasm. Its function is as follows. One of the essential components for the initiation of protein synthesis. Protects formylmethionyl-tRNA from spontaneous hydrolysis and promotes its binding to the 30S ribosomal subunits. Also involved in the hydrolysis of GTP during the formation of the 70S ribosomal complex. The polypeptide is Translation initiation factor IF-2 (Bacteroides fragilis (strain ATCC 25285 / DSM 2151 / CCUG 4856 / JCM 11019 / LMG 10263 / NCTC 9343 / Onslow / VPI 2553 / EN-2)).